We begin with the raw amino-acid sequence, 96 residues long: MNIRPLHDRVIIKREEVETRSAGGIVLTGSAATKSTRAKVLAVGKGRILENGTVQPLDVKVGDTVIFNDGYGVKSEKIDGEEVLIISENDILAIVE.

The protein belongs to the GroES chaperonin family. As to quaternary structure, heptamer of 7 subunits arranged in a ring. Interacts with the chaperonin GroEL.

The protein resides in the cytoplasm. Functionally, together with the chaperonin GroEL, plays an essential role in assisting protein folding. The GroEL-GroES system forms a nano-cage that allows encapsulation of the non-native substrate proteins and provides a physical environment optimized to promote and accelerate protein folding. GroES binds to the apical surface of the GroEL ring, thereby capping the opening of the GroEL channel. This chain is Co-chaperonin GroES, found in Haemophilus influenzae (strain PittEE).